The sequence spans 378 residues: Beta-1,3-N-acetylglucosaminyltransferase lunatic fringe (378 aa).

Topologically, residues 1–8 are cytoplasmic; sequence MLQRCGRR. The helical; Signal-anchor for type II membrane protein transmembrane segment at 9 to 29 threads the bilayer; that stretch reads LLLALVGALLACLLVLTADPP. At 30–378 the chain is on the lumenal side; it reads PTPMPAERGR…TPWCPRSAIF (349 aa). The interval 85-108 is disordered; sequence RDADPPPGVASRQGDGHPRPPAEV. Arg-128 lines the substrate pocket. Asn-166 carries N-linked (GlcNAc...) asparagine glycosylation. Disulfide bonds link Cys-167–Cys-178 and Cys-196–Cys-259. Residue Asp-200 coordinates substrate. Position 201 (Asp-201) interacts with Mn(2+). Asp-289 is a catalytic residue. His-313 serves as a coordination point for Mn(2+). Cys-363 and Cys-372 are joined by a disulfide.

The protein belongs to the glycosyltransferase 31 family. Mn(2+) serves as cofactor. It depends on Co(2+) as a cofactor. Post-translationally, a soluble form may be derived from the membrane form by proteolytic processing. In terms of tissue distribution, detected at 12.5 dpc in all tissues examined with the highest level observed in adult brain and spleen. Detected in the dental epithelium.

It localises to the golgi apparatus. It is found in the golgi apparatus membrane. It catalyses the reaction 3-O-(alpha-L-fucosyl)-L-threonyl-[EGF-like domain protein] + UDP-N-acetyl-alpha-D-glucosamine = 3-O-(N-acetyl-beta-D-glucosaminyl-(1-&gt;3)-alpha-L-fucosyl)-L-threonyl-[EGF-like domain protein] + UDP + H(+). It carries out the reaction 3-O-(alpha-L-fucosyl)-L-seryl-[EGF-like domain protein] + UDP-N-acetyl-alpha-D-glucosamine = 3-O-(N-acetyl-beta-D-glucosaminyl-(1-&gt;3)-alpha-L-fucosyl)-L-seryl-[EGF-like domain protein] + UDP + H(+). Glycosyltransferase that initiates the elongation of O-linked fucose residues attached to EGF-like repeats in the extracellular domain of Notch molecules. Modulates NOTCH1 activity by modifying O-fucose residues at specific EGF-like domains resulting in inhibition of NOTCH1 activation by JAG1 and enhancement of NOTCH1 activation by DLL1 via an increase in its binding to DLL1. Decreases the binding of JAG1 to NOTCH2 but not that of DLL1. Essential mediator of somite segmentation and patterning. During somite boundary formation, it restricts Notch activity in the presomitic mesoderm to a boundary-forming territory in the posterior half of the prospective somite. In this region, Notch function activates a set of genes that are involved in boundary formation and in anterior-posterior somite identity. Ectopically expressed in the thymus, Lfgn inhibits Notch signaling which results in inhibition of T-cell commitment and promotes B-cell development in lymphoid progenitors. May play a role in boundary formation of the enamel knot. The sequence is that of Beta-1,3-N-acetylglucosaminyltransferase lunatic fringe from Mus musculus (Mouse).